A 238-amino-acid chain; its full sequence is uncharacterized protein (238 aa).

The next 7 membrane-spanning stretches (helical) occupy residues 19-39, 64-84, 85-105, 112-132, 141-161, 176-196, and 218-238; these read FIYG…LLGW, WSVI…IYNW, QVLY…YFTK, LWND…SYYF, ILWV…YVKS, VIFH…ILAL, and VGLI…VATL.

To B.subtilis YwiC.

It is found in the cell membrane. This is an uncharacterized protein from Haemophilus influenzae (strain ATCC 51907 / DSM 11121 / KW20 / Rd).